Consider the following 268-residue polypeptide: Small ribosomal subunit protein uS3 (268 aa).

Residues 39-107 (VREYLKKKLK…PVHVNIEEIR (69 aa)) enclose the KH type-2 domain. Residues 216–268 (VEEVAEEKRPRRNARPGGDRRPRRDGEGGGPAGARRGAPRRAGGAGGDGKTGE) are disordered. The segment covering 232 to 242 (GGDRRPRRDGE) has biased composition (basic and acidic residues). Positions 248–257 (GARRGAPRRA) are enriched in low complexity. Gly residues predominate over residues 258–268 (GGAGGDGKTGE).

The protein belongs to the universal ribosomal protein uS3 family. In terms of assembly, part of the 30S ribosomal subunit. Forms a tight complex with proteins S10 and S14.

Its function is as follows. Binds the lower part of the 30S subunit head. Binds mRNA in the 70S ribosome, positioning it for translation. This Paraburkholderia phytofirmans (strain DSM 17436 / LMG 22146 / PsJN) (Burkholderia phytofirmans) protein is Small ribosomal subunit protein uS3.